The chain runs to 423 residues: G-protein coupled receptor 83 (423 aa).

The N-terminal stretch at 1 to 17 (MKVPPVLLLFLLSSVRA) is a signal peptide. At 18–71 (TEQPQVVTEHPSMEAALTGPNASSHFWANYTFSDWQNFVGRRRYGAESQNPTVK) the chain is on the extracellular side. 2 N-linked (GlcNAc...) asparagine glycosylation sites follow: N38 and N46. The helical transmembrane segment at 72-92 (ALLIVAYSFTIVFSLFGNVLV) threads the bilayer. The Cytoplasmic portion of the chain corresponds to 93 to 107 (CHVIFKNQRMHSATS). A helical transmembrane segment spans residues 108–129 (LFIVNLAVADIMITLLNTPFTL). The Extracellular segment spans residues 130–145 (VRFVNSTWVFGKGMCH). A glycan (N-linked (GlcNAc...) asparagine) is linked at N134. An intrachain disulfide couples C144 to C224. A helical transmembrane segment spans residues 146 to 167 (VSRFAQYCSLHVSALTLTAIAV). At 168 to 186 (DRHQVIMHPLKPRISITKG) the chain is on the cytoplasmic side. The helical transmembrane segment at 187-208 (VIYIAVIWVMATFFSLPHAICQ) threads the bilayer. Residues 209–238 (KLFTFKYSEDIVRSLCLPDFPEPADLFWKY) lie on the Extracellular side of the membrane. Residues 239–260 (LDLATFILLYLLPLFIISVAYA) traverse the membrane as a helical segment. The Cytoplasmic portion of the chain corresponds to 261–293 (RVAKKLWLCNTIGDVTTEQYLALRRKKKTTVKM). A helical transmembrane segment spans residues 294–315 (LVLVVVLFALCWFPLNCYVLLL). Residues 316 to 327 (SSKAIHTNNALY) are Extracellular-facing. The chain crosses the membrane as a helical span at residues 328 to 348 (FAFHWFAMSSTCYNPFIYCWL). At 349–423 (NENFRVELKA…SSVEPVVAMS (75 aa)) the chain is on the cytoplasmic side. Residues 389 to 423 (SHGRRAPLPNHHLPSSQIQSGKTDLSSVEPVVAMS) form a disordered region. The segment covering 401 to 414 (LPSSQIQSGKTDLS) has biased composition (polar residues).

It belongs to the G-protein coupled receptor 1 family. In terms of tissue distribution, predominantly expressed in the brain, with moderate expression in the hypothalamus. Expressed in the thymus.

It is found in the cell membrane. Its function is as follows. G-protein coupled receptor for PEN, a neuropeptide produced from the precursor protein, proSAAS (encoded by PCSK1N). Acts through a G(i)- and G(q)-alpha-alpha-mediated pathway in response to PEN. Plays a role in food intake and body weight regulation. May contribute to the regulation of anxiety-related behaviors. The chain is G-protein coupled receptor 83 from Mus musculus (Mouse).